The following is an 839-amino-acid chain: Protein translocase subunit SecA (839 aa).

ATP is bound by residues Gln-86, 104-108 (GEGKT), and Asp-493. The tract at residues 794 to 839 (GIDMDNLQTSGPSDRPDPETSGDADPKNRAQRRAQEQERKRQNKKQ) is disordered. Over residues 807 to 833 (DRPDPETSGDADPKNRAQRRAQEQERK) the composition is skewed to basic and acidic residues.

The protein belongs to the SecA family. Monomer and homodimer. Part of the essential Sec protein translocation apparatus which comprises SecA, SecYEG and auxiliary proteins SecDF. Other proteins may also be involved.

Its subcellular location is the cell membrane. The protein localises to the cytoplasm. The enzyme catalyses ATP + H2O + cellular proteinSide 1 = ADP + phosphate + cellular proteinSide 2.. Functionally, part of the Sec protein translocase complex. Interacts with the SecYEG preprotein conducting channel. Has a central role in coupling the hydrolysis of ATP to the transfer of proteins into and across the cell membrane, serving as an ATP-driven molecular motor driving the stepwise translocation of polypeptide chains across the membrane. The sequence is that of Protein translocase subunit SecA from Brevibacillus brevis (strain 47 / JCM 6285 / NBRC 100599).